A 301-amino-acid chain; its full sequence is MLTHHLSKLATPKFLVPFAGATALSIGLALQYSTSNNYIANETGKTFTDSNEWVDLKLSKSIDLTHNTKHLVFKLKDENDVSGLITASCLLTKFVTPKGNNVIRPYTPVSDVNQSGEIDFVIKKYDGGKMSSHIFDLKEGETLSFKGPIVKWKWEPNQFKSIALIGGGTGITPLYQLLHQITSNPKDNTKVNLIYGNLTPEDILLKKEIDAIASKHKDQVKVHYFVDKADEKKWEGQIGFITKEFLQKELEKPGSDFKVFVCGPPGLYKAISGPKVSPTDQGELTGALKDLGFEKEHVFKF.

The chain crosses the membrane as a helical span at residues 14–30 (FLVPFAGATALSIGLAL). Residues 51-155 (NEWVDLKLSK…KGPIVKWKWE (105 aa)) form the FAD-binding FR-type domain. 158-193 (QFKSIALIGGGTGITPLYQLLHQITSNPKDNTKVNL) lines the FAD pocket.

Belongs to the flavoprotein pyridine nucleotide cytochrome reductase family. It depends on FAD as a cofactor.

The protein resides in the mitochondrion outer membrane. It carries out the reaction 2 Fe(III)-[cytochrome b5] + NADH = 2 Fe(II)-[cytochrome b5] + NAD(+) + H(+). Functionally, may mediate the reduction of outer membrane cytochrome b5. This is NADH-cytochrome b5 reductase 2 (MCR1) from Candida albicans (strain SC5314 / ATCC MYA-2876) (Yeast).